Reading from the N-terminus, the 889-residue chain is MVAVASSSSAASAPRSGEEIREAFLNFYAERGHKRMASASLIPDDPTVLLTIAGMLPFKPVFLGQQERPAPRATSSQKCIRTNDIENVGRTARHHTFFEMLGNFSFGDYFKQRAIEWAWELSTGVYGIDPKNLVVSVFREDDEAELIWRDVVGVNPKRIIRMDEADNFWASGPTGPCGPCSEIYYDFKPELGDEDIDLEDDDRFIEFYNLVFMQYNRDAEGTLTPLANRNIDTGMGLERMAQILQKVPNNYETDLIFPLIQAAADLAGVDYHQLNDKGKTSLKVIGDHSRAVTQLICDGVTASNLGRGYILRRLLRRVVRHGRLLGIDKPFLVTMGEAAIALLKGAHPSVIERQEVILAELQREEARFLETLERGEKLLAEVLASKPTQISGAQAFELYDTYGFPLELTQEIAEEQGLAVDLDGFEAAMEEQRQRAKAAAVSIDLTLQDAIDQVVADQAATCFEGYEALDHASCVQALVVNGGPSTTAKAGDAVQVVLDTTPFYGEGGGQVGDRGVLAGSDLIVRIESVSRSRDVFVHAGRVERGELALGDTVKAQVDRACRRRAQANHTATHLLQAALKQVVDPGIGQAGSLVDFDRLRFDFHCPTAVTPDQLQQVETLINGWINEAHALQVQEMAIDQAKAAGAVAMFGEKYADVVRVVDVPGVSMELCGGTHVTNTAEIGLFKIVAESGVAAGIRRIEAVAGPAVLAYLNERDVVVKQLGDRFKAQPAEIVDRVAALQEELKATGKALAAAQAELAVAKAGALAAKAEAVGDFQLLVERLDGVDGAGLQGAAQSLADQLGDGAAVVIGGLPDPGDMGKVILVAAFGQQVIAAKLQAGKFIGGIAKQCGGGGGGRPNLAQAGGRDGAALPGALDAAQAELTSAFRAL.

Zn(2+) contacts are provided by histidine 569, histidine 573, cysteine 671, and histidine 675.

Belongs to the class-II aminoacyl-tRNA synthetase family. Zn(2+) serves as cofactor.

The protein resides in the cytoplasm. It carries out the reaction tRNA(Ala) + L-alanine + ATP = L-alanyl-tRNA(Ala) + AMP + diphosphate. Catalyzes the attachment of alanine to tRNA(Ala) in a two-step reaction: alanine is first activated by ATP to form Ala-AMP and then transferred to the acceptor end of tRNA(Ala). Also edits incorrectly charged Ser-tRNA(Ala) and Gly-tRNA(Ala) via its editing domain. The sequence is that of Alanine--tRNA ligase from Synechococcus sp. (strain CC9605).